The following is an 880-amino-acid chain: Leucine-rich repeat-containing protein 66 (880 aa).

The chain crosses the membrane as a helical span at residues Leu4–Ala24. Asn45 carries an N-linked (GlcNAc...) asparagine glycan. LRR repeat units follow at residues Lys86–Tyr107, Ala110–Ser130, Leu149–Lys171, Ser172–Asn193, Gln196–Asp217, and Lys220–Ala241. N-linked (GlcNAc...) asparagine glycosylation occurs at Asn115. Positions Ser319–Lys368 are disordered. Basic residues predominate over residues Lys337–Arg354. Residues Ala376–Phe396 form a helical membrane-spanning segment. Disordered regions lie at residues Pro463 to Ala504 and Val679 to Asn746. Polar residues predominate over residues Gly483–Asp493. Residues Cys697–Glu707 are compositionally biased toward acidic residues. Low complexity predominate over residues Ser709–Ser720. Ser723 is modified (phosphoserine). Over residues Asp737–Asn746 the composition is skewed to polar residues. N-linked (GlcNAc...) asparagine glycosylation is present at Asn746. Ser752 carries the phosphoserine modification. Asn756 carries an N-linked (GlcNAc...) asparagine glycan. 2 disordered regions span residues Gly764–Asp816 and Thr855–Lys880. 2 stretches are compositionally biased toward basic and acidic residues: residues Thr788–Glu800 and Asp865–Lys880.

Its subcellular location is the membrane. In Homo sapiens (Human), this protein is Leucine-rich repeat-containing protein 66 (LRRC66).